The following is a 98-amino-acid chain: Aspartyl/glutamyl-tRNA(Asn/Gln) amidotransferase subunit C (98 aa).

This sequence belongs to the GatC family. In terms of assembly, heterotrimer of A, B and C subunits.

It catalyses the reaction L-glutamyl-tRNA(Gln) + L-glutamine + ATP + H2O = L-glutaminyl-tRNA(Gln) + L-glutamate + ADP + phosphate + H(+). The enzyme catalyses L-aspartyl-tRNA(Asn) + L-glutamine + ATP + H2O = L-asparaginyl-tRNA(Asn) + L-glutamate + ADP + phosphate + 2 H(+). Functionally, allows the formation of correctly charged Asn-tRNA(Asn) or Gln-tRNA(Gln) through the transamidation of misacylated Asp-tRNA(Asn) or Glu-tRNA(Gln) in organisms which lack either or both of asparaginyl-tRNA or glutaminyl-tRNA synthetases. The reaction takes place in the presence of glutamine and ATP through an activated phospho-Asp-tRNA(Asn) or phospho-Glu-tRNA(Gln). This Arthrobacter sp. (strain FB24) protein is Aspartyl/glutamyl-tRNA(Asn/Gln) amidotransferase subunit C.